Consider the following 308-residue polypeptide: UDP-N-acetylenolpyruvoylglucosamine reductase (308 aa).

The FAD-binding PCMH-type domain occupies 32–196 (VGGPAARLYK…ISAKLQLSPG (165 aa)). Arginine 176 is a catalytic residue. Catalysis depends on serine 225, which acts as the Proton donor. Residue glutamate 296 is part of the active site.

This sequence belongs to the MurB family. Requires FAD as cofactor.

Its subcellular location is the cytoplasm. The enzyme catalyses UDP-N-acetyl-alpha-D-muramate + NADP(+) = UDP-N-acetyl-3-O-(1-carboxyvinyl)-alpha-D-glucosamine + NADPH + H(+). It participates in cell wall biogenesis; peptidoglycan biosynthesis. Functionally, cell wall formation. The protein is UDP-N-acetylenolpyruvoylglucosamine reductase of Legionella pneumophila (strain Lens).